An 831-amino-acid polypeptide reads, in one-letter code: Sodium/hydrogen exchanger 3 (831 aa).

Positions 1–28 are cleaved as a signal peptide; that stretch reads MWHPALGPGWKPLLALALALTSLRGVRG. Residues 29–48 are Extracellular-facing; that stretch reads IEEEPNSGGSFQIVTFKWHH. The chain crosses the membrane as a helical span at residues 49-71; sequence VQDPYIIALWILVASLAKIVFHL. Topologically, residues 72 to 79 are cytoplasmic; it reads SHKVTSVV. A helical transmembrane segment spans residues 80 to 99; sequence PESALLIVLGLVLGGIVWAA. Over 100–108 the chain is Extracellular; sequence DHIASFTLT. A helical membrane pass occupies residues 109-126; that stretch reads PTLFFFYLLPPIVLDAGY. Residues 127–129 lie on the Cytoplasmic side of the membrane; the sequence is FMP. A helical membrane pass occupies residues 130-165; that stretch reads NRLFFGNLGTILLYAVIGTIWNAATTGLSLYGVFLS. Residues Gly-135, Gly-138, and Thr-139 each coordinate a 1,2-diacyl-sn-glycero-3-phospho-(1D-myo-inositol). At 166 to 178 the chain is on the extracellular side; sequence GLMGELKIGLLDF. A helical transmembrane segment spans residues 179–200; that stretch reads LLFGSLIAAVDPVAVLAVFEEV. The Cytoplasmic portion of the chain corresponds to 201-202; sequence HV. A helical transmembrane segment spans residues 203 to 234; it reads NEVLFIIVFGESLLNDAVTVVLYNVFESFVTL. At 235-241 the chain is on the extracellular side; it reads GGDAVTG. A helical transmembrane segment spans residues 242-276; that stretch reads VDCVKGIVSFFVVSLGGTLVGVIFAFLLSLVTRFT. Topologically, residues 277 to 278 are cytoplasmic; that stretch reads KH. The chain crosses the membrane as a helical span at residues 279 to 301; the sequence is VRIIEPGFVFVISYLSYLTSEML. The Extracellular segment spans residues 302-303; the sequence is SL. The helical transmembrane segment at 304–320 threads the bilayer; the sequence is SAILAITFCGICCQKYV. The Cytoplasmic segment spans residues 321–327; it reads KANISEQ. Residues 328 to 356 form a helical membrane-spanning segment; the sequence is SATTVRYTMKMLASGAETIIFMFLGISAV. The Extracellular portion of the chain corresponds to 357–364; that stretch reads DPVIWTWN. The chain crosses the membrane as a helical span at residues 365-386; that stretch reads TAFVLLTLVFISVYRAIGVVLQ. Over 387-399 the chain is Cytoplasmic; sequence TWILNRYRMVQLE. A 1,2-diacyl-sn-glycero-3-phospho-(1D-myo-inositol) is bound at residue Met-395. Residues 400-423 traverse the membrane as a helical segment; sequence TIDQVVMSYGGLRGAVAYALVVLL. Residues 424-430 are Extracellular-facing; it reads DEKKVKE. A helical transmembrane segment spans residues 431-464; sequence KNLFVSTTLIVVFFTVIFQGLTIKPLVQWLKVKR. At 465-831 the chain is on the cytoplasmic side; the sequence is SEQREPKLNE…QPASPESTHM (367 aa). 3 residues coordinate a 1,2-diacyl-sn-glycero-3-phospho-(1D-myo-inositol): Gln-494, Ile-495, and His-497. 2 positions are modified to phosphoserine: Ser-552 and Ser-560. Positions 573–587 are interaction with EZR; it reads RPSTVEASVSYFLRE. Positions 588 to 665 are interaction with NHERF4; that stretch reads NVSAVCLDMQ…RKRLESFKSA (78 aa). Positions 589–693 are interaction with AHCYL1; that stretch reads VSAVCLDMQS…AQKRRNSSIP (105 aa). A phosphoserine mark is found at Ser-590 and Ser-605. Phosphoserine; by SGK1 is present on Ser-661. Ser-716, Ser-807, and Ser-810 each carry phosphoserine. A disordered region spans residues 808–831; it reads VDSFLQADGPEEQLQPASPESTHM. Positions 822-831 are enriched in polar residues; the sequence is QPASPESTHM.

Belongs to the monovalent cation:p,roton antiporter 1 (CPA1) transporter (TC 2.A.36) family. In terms of assembly, homodimer. Found in the forms of complex and dynamic macromolecular complexes. Binds NHERF1 and NHERF2. Interacts with NHERF4 and interactions decrease in response to elevated calcium ion levels. Interacts with PDZK1 (via C-terminal PDZ domain). Interacts with CHP1; this interaction increases trafficking and activity at the plasma membrane of SLC9A3. Interacts with CHP2 and SHANK2. Interacts with AHCYL1; the interaction is required for SLC9A3 activity. Interacts with EZR; interaction targets SLC9A3 to the apical membrane. Interacts with SNX27 (via PDZ domains); directs SLC9A3 membrane insertion from early endosomes to the plasma membrane. Post-translationally, phosphorylated by PRKACA at Ser-552 and Ser-605, which inhibits activity. Phosphorylation of Ser-605 is essential for cAMP-mediated inhibition of SLC9A3. Phosphorylation at Ser-661 by SGK1 is associated with increased abundance at the cell membrane. Phosphorylation at Ser-716 by CSNK2A1 regulates SLC9A3 activity through the formation of multiple signaling complexes. In terms of tissue distribution, most abundant in colon and small intestine, followed by kidney and stomach. In kidney, expressed in proximal tubules and outer medulla (at protein level).

Its subcellular location is the apical cell membrane. It is found in the cell membrane. The protein localises to the recycling endosome membrane. The protein resides in the early endosome membrane. The enzyme catalyses Na(+)(in) + H(+)(out) = Na(+)(out) + H(+)(in). Its activity is regulated as follows. Seems to switch between active and inactive modes in response to various stimuli. Activated directly or indirectly by membrane phosphatidylinositol (PIs). Regulated by a variety of auxiliary proteins, which facilitate the maturation, cell surface expression and function of the transporter. Inhibited specifically by the drug tenapanor. Its function is as follows. Plasma membrane Na(+)/H(+) antiporter. Exchanges intracellular H(+) ions for extracellular Na(+) in 1:1 stoichiometry, playing a key role in salt and fluid absorption and pH homeostasis. Major apical Na(+)/H(+) exchanger in kidney and intestine playing an important role in renal and intestine Na(+) absorption and blood pressure regulation. In Rattus norvegicus (Rat), this protein is Sodium/hydrogen exchanger 3 (Slc9a3).